A 617-amino-acid polypeptide reads, in one-letter code: Electron transfer flavoprotein-ubiquinone oxidoreductase, mitochondrial (617 aa).

The N-terminal 33 residues, 1–33 (MLVPLAKLSCPAYQCFHALKIKKNYLPLCATRW), are a transit peptide targeting the mitochondrion. 71 to 85 (VVIVGAGPAGLSAAV) is a binding site for FAD. Lys96 is subject to N6-acetyllysine. The stretch at 109–130 (IGAHTLSGACLDPGAFKELFPD) is an intramembrane region. 2 positions are modified to N6-acetyllysine: Lys132 and Lys223. Positions 305 and 306 each coordinate a ubiquinone. Lys357 is modified (N6-acetyllysine). Residues 428 to 447 (MGLHVTEYEDNLKNSWVWKE) lie within the membrane without spanning it. A Phosphoserine modification is found at Ser551. [4Fe-4S] cluster-binding residues include Cys561, Cys586, Cys589, and Cys592. The 4Fe-4S ferredoxin-type domain maps to 577–606 (FRLQINAQNCVHCKTCDIKDPSQNINWVVP).

This sequence belongs to the ETF-QO/FixC family. As to quaternary structure, monomer. [4Fe-4S] cluster is required as a cofactor. It depends on FAD as a cofactor.

The protein resides in the mitochondrion inner membrane. It catalyses the reaction a ubiquinone + reduced [electron-transfer flavoprotein] = a ubiquinol + oxidized [electron-transfer flavoprotein] + H(+). Its function is as follows. Accepts electrons from ETF and reduces ubiquinone. This chain is Electron transfer flavoprotein-ubiquinone oxidoreductase, mitochondrial (ETFDH), found in Pongo abelii (Sumatran orangutan).